We begin with the raw amino-acid sequence, 170 residues long: MDRAQKEKVVEELGQIFESSGVVVVAHYQGLTVANMQDLRGRVRDAGGAVRVAKNKLAKIALDGTDVAGISDLMTGMTVLAYSDDPVAAAKAADEFAKENDNYVILGGAMGENILDADGVKAVAKMPSREELISSIAGCIGAPAANIAGAIGAPASNIASVLSTIEEKAA.

This sequence belongs to the universal ribosomal protein uL10 family. In terms of assembly, part of the ribosomal stalk of the 50S ribosomal subunit. The N-terminus interacts with L11 and the large rRNA to form the base of the stalk. The C-terminus forms an elongated spine to which L12 dimers bind in a sequential fashion forming a multimeric L10(L12)X complex.

Its function is as follows. Forms part of the ribosomal stalk, playing a central role in the interaction of the ribosome with GTP-bound translation factors. The sequence is that of Large ribosomal subunit protein uL10 from Jannaschia sp. (strain CCS1).